The following is a 221-amino-acid chain: Protein GrpE (221 aa).

Residues 1–83 (MEQEQKATQE…AKNCRTRSED (83 aa)) are disordered. Residues 23 to 32 (QEEKAEERGG) are compositionally biased toward basic and acidic residues. The segment covering 41 to 53 (ENLQQENTQAQQE) has biased composition (low complexity).

The protein belongs to the GrpE family. In terms of assembly, homodimer.

It is found in the cytoplasm. In terms of biological role, participates actively in the response to hyperosmotic and heat shock by preventing the aggregation of stress-denatured proteins, in association with DnaK and GrpE. It is the nucleotide exchange factor for DnaK and may function as a thermosensor. Unfolded proteins bind initially to DnaJ; upon interaction with the DnaJ-bound protein, DnaK hydrolyzes its bound ATP, resulting in the formation of a stable complex. GrpE releases ADP from DnaK; ATP binding to DnaK triggers the release of the substrate protein, thus completing the reaction cycle. Several rounds of ATP-dependent interactions between DnaJ, DnaK and GrpE are required for fully efficient folding. The chain is Protein GrpE from Geobacillus stearothermophilus (Bacillus stearothermophilus).